A 509-amino-acid polypeptide reads, in one-letter code: ATP synthase subunit beta, mitochondrial (509 aa).

Residues 1-32 (MVLPRLIPRLSRSAFKVAQANNRVFNAPFRGM) constitute a mitochondrion transit peptide. 189 to 196 (GAGVGKTV) is a binding site for ATP.

In terms of assembly, F-type ATP synthases have 2 components, the catalytic core F(1) and the membrane-embedded component F(0), linked together by a central stalk and a peripheral stalk. The central stalk, also called rotor shaft, is often seen as part of F(1). The peripheral stalk is seen as part of F(0). F(0) contains the membrane channel next to the rotor. F-type ATP synthases form dimers but each monomer functions independently in ATP generation. The dimer consists of 17 different polypeptides: ATP1 (subunit alpha, 3 molecules per monomer, part of F(1)), ATP2 (subunit beta, 3 copies per monomer, part of F(1)), ATP3 (subunit gamma, part of the central stalk), ATP4 (subunit b, part of the peripheral stalk), ATP5/OSCP (subunit 5/OSCP, part of the peripheral stalk), ATP6 (subunit a, part of the peripheral stalk), ATP7 (subunit d, part of the peripheral stalk), ATP8 (subunit 8, part of the peripheral stalk), OLI1 (subunit c, part of the rotor, 10 molecules per monomer), ATP14 (subunit h, part of the peripheral stalk), ATP15 (subunit epsilon, part of the central stalk), ATP16 (subunit delta, part of the central stalk), ATP17 (subunit f, part of the peripheral stalk), ATP18 (subunit i/j, part of the peripheral stalk), ATP19 (subunit k, dimer-specific, at interface between monomers), ATP20 (subunit g, at interface between monomers), TIM11 (subunit e, at interface between monomers).

It localises to the mitochondrion inner membrane. It catalyses the reaction ATP + H2O + 4 H(+)(in) = ADP + phosphate + 5 H(+)(out). Mitochondrial membrane ATP synthase (F(1)F(0) ATP synthase or Complex V) produces ATP from ADP in the presence of a proton gradient across the membrane which is generated by electron transport complexes of the respiratory chain. F-type ATP synthases consist of two structural domains, F(1) - containing the extramembraneous catalytic core, and F(0) - containing the membrane proton channel, linked together by a central stalk and a peripheral stalk. During catalysis, ATP synthesis in the catalytic domain of F(1) is coupled via a rotary mechanism of the central stalk subunits to proton translocation. Subunits alpha/ATP1 and beta/ATP2 form the catalytic core in F(1). Rotation of the central stalk against the surrounding alpha/ATP1(3)beta/ATP2(3) subunits leads to hydrolysis of ATP in three separate catalytic sites on the beta/ATP2 subunits. The polypeptide is ATP synthase subunit beta, mitochondrial (Yarrowia lipolytica (strain CLIB 122 / E 150) (Yeast)).